A 1076-amino-acid chain; its full sequence is Histone deacetylase 4 (1076 aa).

A coiled-coil region spans residues 66 to 169; that stretch reads REQQLQQELL…GKESAVASTE (104 aa). The segment at 117–312 is interaction with MEF2A; sequence MLAMKHQQEL…NSSSGNVSTE (196 aa). Over residues 132–162 the composition is skewed to basic and acidic residues; that stretch reads KLERHRQEQELEKQHREQKLQQLKNKEKGKE. Disordered regions lie at residues 132–166, 205–225, and 239–323; these read KLER…SAVA, TQHS…ASYN, and PLRK…PSAP. The span at 205 to 224 shows a compositional bias: polar residues; the sequence is TQHSSLDQSSPPQSGVSASY. At Ser-209 the chain carries Phosphoserine. At Ser-245 the chain carries Phosphoserine; by CaMK4 and SIK1. Over residues 258-273 the composition is skewed to basic and acidic residues; it reads KVAERRSSPLLRRKDG. The segment covering 289–310 has biased composition (low complexity); that stretch reads SACSSAPGSGPSSPNSSSGNVS. A PxLPxI/L motif; mediates interaction with ANKRA2 and 14-3-3 proteins motif is present at residues 348–353; sequence PSLPNI. At Ser-349 the chain carries Phosphoserine. Ser-465 is subject to Phosphoserine; by CaMK4 and SIK1. Disordered stretches follow at residues 506-529, 541-580, and 622-645; these read ISKP…ELRE, RLPG…QRPA, and RPLS…EPPT. A compositionally biased stretch (basic and acidic residues) spans 514–529; the sequence is RQPESHPEETEEELRE. Residue Lys-556 forms a Glycyl lysine isopeptide (Lys-Gly) (interchain with G-Cter in SUMO) linkage. Ser-562 is modified (phosphoserine). Positions 626–638 are enriched in polar residues; sequence RAQSSPASATFPM. Phosphoserine; by CaMK4 is present on Ser-629. The residue at position 630 (Ser-630) is a Phosphoserine. Residues 652–1076 are histone deacetylase; sequence GLVYDTLMLK…EEPMEEEPPL (425 aa). Zn(2+) contacts are provided by Cys-664, Cys-666, His-672, and Cys-743. The active site involves His-795. Residues 1043 to 1076 carry the Nuclear export signal motif; the sequence is EEAETVTAMASLSVGVKPAEKRSEEEPMEEEPPL.

The protein belongs to the histone deacetylase family. HD type 2 subfamily. Homodimer. Homodimerization via its N-terminal domain. Interacts with HDAC7. Interacts with MEF2A, MEF2C, MEF2D, MORC2 and NR2C1. Interacts with a 14-3-3 chaperone proteins in a phosphorylation dependent manner. Interacts with 14-3-3 protein YWHAB. Interacts with BTBD14B. Interacts with KDM5B. Interacts (via PxLPxI/L motif) with ANKRA2 (via ankyrin repeats). Interacts with CUL7 (as part of the 3M complex); negatively regulated by ANKRA2. Interacts with EP300 in the presence of TFAP2C. Interacts with AHRR. Interacts with MYOCD. Interacts with HSPA1A and HSPA1B leading to their deacetylation at 'Lys-77'. Interacts with ZBTB7B; the interaction allows the recruitment of HDAC4 on CD8 loci for deacetylation and possible inhibition of CD8 genes expression. Interacts with DHX36. Interacts with SIK3; this interaction leads to HDAC4 retention in the cytoplasm. Interacts with ZNF638. Phosphorylated by CaMK4 at Ser-245, Ser-465 and Ser-629. Phosphorylation at other residues by CaMK2D is required for the interaction with 14-3-3. Phosphorylation at Ser-349, within the PxLPxI/L motif, impairs the binding of ANKRA2 but generates a high-affinity docking site for 14-3-3. Post-translationally, sumoylation on Lys-556 is promoted by the E3 SUMO-protein ligase RANBP2, and prevented by phosphorylation by CaMK4.

It is found in the nucleus. The protein localises to the cytoplasm. The enzyme catalyses N(6)-acetyl-L-lysyl-[histone] + H2O = L-lysyl-[histone] + acetate. Responsible for the deacetylation of lysine residues on the N-terminal part of the core histones (H2A, H2B, H3 and H4). Histone deacetylation gives a tag for epigenetic repression and plays an important role in transcriptional regulation, cell cycle progression and developmental events. Histone deacetylases act via the formation of large multiprotein complexes. Involved in muscle maturation via its interaction with the myocyte enhancer factors such as MEF2A, MEF2C and MEF2D. Deacetylates HSPA1A and HSPA1A at 'Lys-77' leading to their preferential binding to co-chaperone STUB1. In Mus musculus (Mouse), this protein is Histone deacetylase 4 (Hdac4).